A 363-amino-acid chain; its full sequence is 3-dehydroquinate synthase (363 aa).

NAD(+) contacts are provided by residues 103–107, 127–128, K139, K148, and 166–169; these read GAVGD, TT, and FSET. Zn(2+) is bound by residues E181, H243, and H260.

The protein belongs to the sugar phosphate cyclases superfamily. Dehydroquinate synthase family. Co(2+) serves as cofactor. The cofactor is Zn(2+). Requires NAD(+) as cofactor.

Its subcellular location is the cytoplasm. It carries out the reaction 7-phospho-2-dehydro-3-deoxy-D-arabino-heptonate = 3-dehydroquinate + phosphate. It functions in the pathway metabolic intermediate biosynthesis; chorismate biosynthesis; chorismate from D-erythrose 4-phosphate and phosphoenolpyruvate: step 2/7. Functionally, catalyzes the conversion of 3-deoxy-D-arabino-heptulosonate 7-phosphate (DAHP) to dehydroquinate (DHQ). The protein is 3-dehydroquinate synthase of Lysinibacillus sphaericus (strain C3-41).